Consider the following 340-residue polypeptide: Pilin (340 aa).

Positions 1-23 are cleaved as a signal peptide; it reads MKLRHLLLTGAALTSFAATTVHG. 2 consecutive cross-links (isoaspartyl lysine isopeptide (Lys-Asn)) follow at residues 36–168 and 179–303; these read KNLD…QFKN and KKVS…TFTN. Residue Lys-161 forms a Threonyl lysine isopeptide (Lys-Thr) (interchain with T-311) linkage. The short motif at 308-312 is the EVPTG sorting signal element; that stretch reads EVPTG. Thr-311 carries the post-translational modification Pentaglycyl murein peptidoglycan amidated threonine; alternate. Thr-311 is covalently cross-linked (Threonyl lysine isopeptide (Thr-Lys) (interchain with K-161); alternate). A propeptide spans 312–340 (removed by sortase C1); it reads GVAMTVAPYIALGIVAVGGALYFVKKKNA.

The protein belongs to the Streptococcus pilin family. As to quaternary structure, forms columns of about 3-nanometers in diameter of head-to-tail-assembled molecules. In terms of processing, proteolytically processed and assembled in pili through a transpeptidation reaction catalyzed by the sortase C1. The last pilin subunit is cross-linked to the peptidoglycan.

The protein resides in the secreted. It is found in the cell wall. It localises to the fimbrium. Functionally, major component of the pilus. A stack of the pilin subunits, joined by intermolecular isopeptide bonds, forms the pilus. The pilus is required for bacterial adhesion to host cells, for bacterial aggregation, and for biofilm formation. This Streptococcus pyogenes serotype M1 protein is Pilin.